The chain runs to 331 residues: Lactamase-like protein nscB (331 aa).

The Zn(2+) site is built by His-106, His-108, Asp-110, and His-111. The active-site Proton donor/acceptor is Asp-110.

The protein belongs to the metallo-beta-lactamase superfamily. The cofactor is Zn(2+).

Its pathway is secondary metabolite biosynthesis. Lactamase-like protein; part of the gene cluster that mediates the biosynthesis of neosartoricin B, a prenylated anthracenone that probably exhibits T-cell antiproliferative activity, suggestive of a physiological role as an immunosuppressive agent. The non-reducing polyketide synthase nscA probably synthesizes and cyclizes the decaketide backbone. The hydrolase nscB then mediates the product release through hydrolysis followed by spontaneous decarboxylation. The prenyltransferase nscD catalyzes the addition of the dimethylallyl group to the aromatic C5. The FAD-dependent monooxygenase nscC is then responsible for the stereospecific hydroxylation at C2. Neosartoricin B can be converted into two additional compounds neosartoricins C and D. Neosartoricin C is a spirocyclic compound that is cyclized through the attack of C3 hydroxyl on C14, followed by dehydration. On the other hand, neosartoricin D is a further cyclized compound in which attack of C2 on C14 in neosartoricin C results in the formation of the acetal-containing dioxabicyclo-octanone ring. Both of these compounds are novel and possibly represent related metabolites of the gene cluster. This Trichophyton equinum (strain ATCC MYA-4606 / CBS 127.97) (Horse ringworm fungus) protein is Lactamase-like protein nscB.